We begin with the raw amino-acid sequence, 894 residues long: Nitrate reductase [NADPH] (894 aa).

The tract at residues 1-79 (MAVKSQLGVT…PEDLKTPDHR (79 aa)) is disordered. A compositionally biased stretch (polar residues) spans 7–16 (LGVTYTTKTF). Residues 69 to 79 (LPEDLKTPDHR) are compositionally biased toward basic and acidic residues. Cysteine 169 contacts Mo-molybdopterin. The region spanning 535–610 (VRIISLEELK…MPQYHIGTLN (76 aa)) is the Cytochrome b5 heme-binding domain. Heme-binding residues include histidine 570 and histidine 593. Residues 638–749 (KYWSKAILET…KGPVGKFEYL (112 aa)) form the FAD-binding FR-type domain. FAD-binding positions include 692–695 (RAYT), 709–713 (LIKIY), 723–725 (KMT), serine 773, and threonine 776.

It belongs to the nitrate reductase family. As to quaternary structure, homodimer. FAD serves as cofactor. It depends on heme as a cofactor. Requires Mo-molybdopterin as cofactor.

The enzyme catalyses nitrite + NADP(+) + H2O = nitrate + NADPH + H(+). In terms of biological role, nitrate reductase is a key enzyme involved in the first step of nitrate assimilation in plants, fungi and bacteria. The sequence is that of Nitrate reductase [NADPH] (NIA) from Beauveria bassiana (White muscardine disease fungus).